The primary structure comprises 467 residues: Amino-acid permease RocE (467 aa).

The next 12 membrane-spanning stretches (helical) occupy residues 21–41 (FMIS…GFTI), 47–67 (LGAV…MLCL), 87–107 (FISP…WAVT), 122–142 (WFPH…MFIL), 162–182 (ILII…LIDL), 207–227 (MLIT…IGVA), 246–266 (VWRT…MIPW), 283–303 (IGIP…LLSV), 336–356 (VPMY…LTKF), 361–381 (TVYM…WITI), 409–429 (YPVL…SLAF), and 435–455 (IALY…HVVI).

This sequence belongs to the amino acid-polyamine-organocation (APC) superfamily. Amino acid transporter (AAT) (TC 2.A.3.1) family.

The protein resides in the cell membrane. Functionally, putative transport protein involved in arginine degradative pathway. Probably transports arginine or ornithine. This Bacillus subtilis (strain 168) protein is Amino-acid permease RocE.